The sequence spans 138 residues: Large ribosomal subunit protein uL16 (138 aa).

Basic residues predominate over residues 1–16 (MLIPRKVAHRKQHHPG). Positions 1 to 24 (MLIPRKVAHRKQHHPGRTGAAKGG) are disordered.

This sequence belongs to the universal ribosomal protein uL16 family. As to quaternary structure, part of the 50S ribosomal subunit.

Its function is as follows. Binds 23S rRNA and is also seen to make contacts with the A and possibly P site tRNAs. The polypeptide is Large ribosomal subunit protein uL16 (Frankia alni (strain DSM 45986 / CECT 9034 / ACN14a)).